Reading from the N-terminus, the 354-residue chain is Protein RecA (354 aa).

67–74 (GPESSGKT) contacts ATP. Positions 333–354 (MNEFVPSSEEQAEASLSEDHDQ) are disordered.

The protein belongs to the RecA family.

It is found in the cytoplasm. Functionally, can catalyze the hydrolysis of ATP in the presence of single-stranded DNA, the ATP-dependent uptake of single-stranded DNA by duplex DNA, and the ATP-dependent hybridization of homologous single-stranded DNAs. It interacts with LexA causing its activation and leading to its autocatalytic cleavage. This is Protein RecA from Laribacter hongkongensis (strain HLHK9).